We begin with the raw amino-acid sequence, 228 residues long: tRNA (guanine-N(1)-)-methyltransferase (228 aa).

S-adenosyl-L-methionine contacts are provided by residues Gly-111 and 131–136 (IGDFIL).

It belongs to the RNA methyltransferase TrmD family. Homodimer.

Its subcellular location is the cytoplasm. The catalysed reaction is guanosine(37) in tRNA + S-adenosyl-L-methionine = N(1)-methylguanosine(37) in tRNA + S-adenosyl-L-homocysteine + H(+). In terms of biological role, specifically methylates guanosine-37 in various tRNAs. In Pelagibacter ubique (strain HTCC1062), this protein is tRNA (guanine-N(1)-)-methyltransferase.